A 118-amino-acid chain; its full sequence is Elongin-B (118 aa).

Residue M1 is modified to N-acetylmethionine. One can recognise a Ubiquitin-like domain in the interval 1-79 (MDVFLMIRRH…QAPATVGLAF (79 aa)). T84 carries the post-translational modification Phosphothreonine. The segment at 91–118 (EPFSSPPELPDVMKPQDSGGSANEQAVQ) is disordered. Residues S108 and S111 each carry the phosphoserine modification. Positions 108-118 (SGGSANEQAVQ) are enriched in polar residues.

It belongs to the Elongin B family. Heterotrimer of an A (ELOA, ELOA2 or ELOA3P), ELOB and ELOC subunit. The elongin BC complex interacts with EPOP; leading to recruit the elongin BC complex to Polycomb group (PcG) target genes, thereby restricting excessive activity of the PRC2/EED-EZH2 complex. Component of multiple cullin-RING E3 ubiquitin-protein ligase complexes composed of Elongin BC (ELOB and ELOC), a cullin (either CUL2 or CUL5), a catalytic subunit (either RBX1 or RNF7/RBX2), as well as a substrate adapter protein that can be either ASB2, ASB9, ASB11, KLHDC2, KLHDC3, KLHDC10, APPBP2, FEM1A, FEM1B, FEM1C, LRR1, PCMTD1, SOCS1, SOCS2, SOCS5, SPSB1, SPSB3, ELOA, VHL, WSB1 or RAB40C. As part of the Elongin BC E3 ubiquitin ligase complex; interacts with NRBP1. May also interact with DCUN1D1, DCUN1D2, DCUN1D3 and DCUN1D5. May form oligomers as a KLHDC2/KLHDC3-ELOB-ELOC complex; this interaction is autoinhibitory for the E3 ligase complex as the substrate-binding site of KLHDC2/KLHDC3 is blocked in the oligomer.

It is found in the nucleus. Its pathway is protein modification; protein ubiquitination. Functionally, SIII, also known as elongin, is a general transcription elongation factor that increases the RNA polymerase II transcription elongation past template-encoded arresting sites. Subunit A is transcriptionally active and its transcription activity is strongly enhanced by binding to the dimeric complex of the SIII regulatory subunits B and C (elongin BC complex). In embryonic stem cells, the elongin BC complex is recruited by EPOP to Polycomb group (PcG) target genes in order generate genomic region that display both active and repressive chromatin properties, an important feature of pluripotent stem cells. Core component of multiple cullin-2 and cullin-5-RING E3 ubiquitin-protein ligase complexes (ECS complexes), which mediate the ubiquitination of target proteins. By binding to BC-box motifs it seems to link target recruitment subunits, like VHL and members of the SOCS box family, to Cullin/RBX1 modules that activate E2 ubiquitination enzymes. Component the von Hippel-Lindau ubiquitination complex CBC(VHL). A number of ECS complexes (containing either KLHDC2, KLHDC3, KLHDC10, APPBP2, FEM1A, FEM1B or FEM1C as substrate-recognition component) are part of the DesCEND (destruction via C-end degrons) pathway, which recognizes a C-degron located at the extreme C terminus of target proteins, leading to their ubiquitination and degradation. The ECS(ASB9) complex mediates ubiquitination and degradation of CKB. As part of a multisubunit ubiquitin ligase complex, polyubiquitinates monoubiquitinated POLR2A. ECS(LRR1) ubiquitinates MCM7 and promotes CMG replisome disassembly by VCP and chromatin extraction during S-phase. As part of the ECS(RAB40C) complex, mediates ANKRD28 ubiquitination and degradation, thereby inhibiting protein phosphatase 6 (PP6) complex activity and focal adhesion assembly during cell migration. The sequence is that of Elongin-B from Mus musculus (Mouse).